A 293-amino-acid polypeptide reads, in one-letter code: Ribosomal protein L11 methyltransferase (293 aa).

S-adenosyl-L-methionine is bound by residues T144, G165, D187, and N228.

Belongs to the methyltransferase superfamily. PrmA family.

The protein localises to the cytoplasm. The enzyme catalyses L-lysyl-[protein] + 3 S-adenosyl-L-methionine = N(6),N(6),N(6)-trimethyl-L-lysyl-[protein] + 3 S-adenosyl-L-homocysteine + 3 H(+). Functionally, methylates ribosomal protein L11. This Methylococcus capsulatus (strain ATCC 33009 / NCIMB 11132 / Bath) protein is Ribosomal protein L11 methyltransferase.